We begin with the raw amino-acid sequence, 263 residues long: Acetyl-coenzyme A carboxylase carboxyl transferase subunit beta (263 aa).

Residues 1–263 form the CoA carboxyltransferase N-terminal domain; it reads MDCPSCKVSY…LKETPKKKKA (263 aa). Positions 3, 6, 22, and 25 each coordinate Zn(2+). The C4-type zinc-finger motif lies at 3–25; the sequence is CPSCKVSYDEEVFTDNLMVCPHC.

Belongs to the AccD/PCCB family. As to quaternary structure, acetyl-CoA carboxylase is a heterohexamer composed of biotin carboxyl carrier protein (AccB), biotin carboxylase (AccC) and two subunits each of ACCase subunit alpha (AccA) and ACCase subunit beta (AccD). Zn(2+) serves as cofactor.

Its subcellular location is the cytoplasm. The enzyme catalyses N(6)-carboxybiotinyl-L-lysyl-[protein] + acetyl-CoA = N(6)-biotinyl-L-lysyl-[protein] + malonyl-CoA. The protein operates within lipid metabolism; malonyl-CoA biosynthesis; malonyl-CoA from acetyl-CoA: step 1/1. In terms of biological role, component of the acetyl coenzyme A carboxylase (ACC) complex. Biotin carboxylase (BC) catalyzes the carboxylation of biotin on its carrier protein (BCCP) and then the CO(2) group is transferred by the transcarboxylase to acetyl-CoA to form malonyl-CoA. The polypeptide is Acetyl-coenzyme A carboxylase carboxyl transferase subunit beta (Treponema denticola (strain ATCC 35405 / DSM 14222 / CIP 103919 / JCM 8153 / KCTC 15104)).